We begin with the raw amino-acid sequence, 309 residues long: Protein-L-isoaspartate O-methyltransferase 2 (309 aa).

The Nuclear localization signal motif lies at Lys-23–Lys-28. Residue Ser-144 is part of the active site.

This sequence belongs to the methyltransferase superfamily. L-isoaspartyl/D-aspartyl protein methyltransferase family. In terms of tissue distribution, expressed in rosette leaves, stems, cauline leaves, flowers and developing seeds.

The protein resides in the nucleus. The enzyme catalyses [protein]-L-isoaspartate + S-adenosyl-L-methionine = [protein]-L-isoaspartate alpha-methyl ester + S-adenosyl-L-homocysteine. Catalyzes the methyl esterification of L-isoaspartyl residues in peptides and proteins that result from spontaneous decomposition of normal L-aspartyl and L-asparaginyl residues. It plays a role in the repair and/or degradation of damaged proteins. This chain is Protein-L-isoaspartate O-methyltransferase 2 (PIMT2), found in Arabidopsis thaliana (Mouse-ear cress).